A 70-amino-acid polypeptide reads, in one-letter code: DNA gyrase inhibitor YacG (70 aa).

4 residues coordinate Zn(2+): Cys7, Cys10, Cys26, and Cys30.

The protein belongs to the DNA gyrase inhibitor YacG family. In terms of assembly, interacts with GyrB. It depends on Zn(2+) as a cofactor.

Inhibits all the catalytic activities of DNA gyrase by preventing its interaction with DNA. Acts by binding directly to the C-terminal domain of GyrB, which probably disrupts DNA binding by the gyrase. This is DNA gyrase inhibitor YacG from Shewanella woodyi (strain ATCC 51908 / MS32).